We begin with the raw amino-acid sequence, 414 residues long: Gamma-glutamyl phosphate reductase (414 aa).

Belongs to the gamma-glutamyl phosphate reductase family.

It localises to the cytoplasm. It carries out the reaction L-glutamate 5-semialdehyde + phosphate + NADP(+) = L-glutamyl 5-phosphate + NADPH + H(+). It functions in the pathway amino-acid biosynthesis; L-proline biosynthesis; L-glutamate 5-semialdehyde from L-glutamate: step 2/2. In terms of biological role, catalyzes the NADPH-dependent reduction of L-glutamate 5-phosphate into L-glutamate 5-semialdehyde and phosphate. The product spontaneously undergoes cyclization to form 1-pyrroline-5-carboxylate. This chain is Gamma-glutamyl phosphate reductase, found in Kosmotoga olearia (strain ATCC BAA-1733 / DSM 21960 / TBF 19.5.1).